Consider the following 129-residue polypeptide: Small ribosomal subunit protein uS11 (129 aa).

This sequence belongs to the universal ribosomal protein uS11 family. Part of the 30S ribosomal subunit. Interacts with proteins S7 and S18. Binds to IF-3.

In terms of biological role, located on the platform of the 30S subunit, it bridges several disparate RNA helices of the 16S rRNA. Forms part of the Shine-Dalgarno cleft in the 70S ribosome. This chain is Small ribosomal subunit protein uS11, found in Maricaulis maris (strain MCS10) (Caulobacter maris).